The chain runs to 390 residues: Magnesium-protoporphyrin IX monomethyl ester [oxidative] cyclase (390 aa).

The protein belongs to the AcsF family. The cofactor is Fe cation.

The enzyme catalyses Mg-protoporphyrin IX 13-monomethyl ester + 3 NADPH + 3 O2 + 2 H(+) = 3,8-divinyl protochlorophyllide a + 3 NADP(+) + 5 H2O. It functions in the pathway porphyrin-containing compound metabolism; chlorophyll biosynthesis (light-independent). Catalyzes the formation of the isocyclic ring in chlorophyll biosynthesis. Mediates the cyclase reaction, which results in the formation of divinylprotochlorophyllide (Pchlide) characteristic of all chlorophylls from magnesium-protoporphyrin IX 13-monomethyl ester (MgPMME). This chain is Magnesium-protoporphyrin IX monomethyl ester [oxidative] cyclase, found in Prochlorococcus marinus (strain MIT 9312).